The following is a 61-amino-acid chain: Photosystem II reaction center protein K (61 aa).

Residues 1-24 constitute a propeptide that is removed on maturation; the sequence is MINIVSLVCIYINSVPYSSIFFLD. The helical transmembrane segment at 36–56 threads the bilayer; the sequence is IVDIMPVIPLFFFLLAFVWQA.

Belongs to the PsbK family. As to quaternary structure, PSII is composed of 1 copy each of membrane proteins PsbA, PsbB, PsbC, PsbD, PsbE, PsbF, PsbH, PsbI, PsbJ, PsbK, PsbL, PsbM, PsbT, PsbX, PsbY, PsbZ, Psb30/Ycf12, at least 3 peripheral proteins of the oxygen-evolving complex and a large number of cofactors. It forms dimeric complexes.

It is found in the plastid. The protein resides in the chloroplast thylakoid membrane. One of the components of the core complex of photosystem II (PSII). PSII is a light-driven water:plastoquinone oxidoreductase that uses light energy to abstract electrons from H(2)O, generating O(2) and a proton gradient subsequently used for ATP formation. It consists of a core antenna complex that captures photons, and an electron transfer chain that converts photonic excitation into a charge separation. The chain is Photosystem II reaction center protein K from Lotus japonicus (Lotus corniculatus var. japonicus).